Here is a 559-residue protein sequence, read N- to C-terminus: Pentatricopeptide repeat-containing protein At2g42920, chloroplastic (559 aa).

Residues 1–14 constitute a chloroplast transit peptide; the sequence is MSPTILSFSGVTVP. PPR repeat units lie at residues 88–122, 125–159, 160–190, 191–221, 222–256, 257–291, 292–322, 323–357, 358–388, and 394–424; these read NPFV…SPSV, QRLT…GLED, DSFI…MIGF, DVVA…MPQR, NGVS…DVKP, DGFT…RFEL, NSIV…APKK, QLSC…GLEP, DSVS…MKEK, and SIKH…MPVE. Residues 429–504 are type E motif; that stretch reads IWSSLLSACR…EVGCSSIEVD (76 aa). Residues 505–535 are type E(+) motif; the sequence is FEVHEFISCGGTHPKSAEIYSLLDILNWDVS.

This sequence belongs to the PPR family. PCMP-E subfamily.

The protein localises to the plastid. The protein resides in the chloroplast. The polypeptide is Pentatricopeptide repeat-containing protein At2g42920, chloroplastic (PCMP-E75) (Arabidopsis thaliana (Mouse-ear cress)).